A 170-amino-acid chain; its full sequence is MRKLIIEPLTKEAFAPFGDVIETDGSDHFMINNGSTMRFHRLAEVQTAQPDDKAIISIFRAEALPMPLTIGMLERHPQGSQAFIPLLGNPFLIVVAPVGDAPESELTRAFVSNGRQGVNYHRGVWHHPVLTIEKRDDFLVVDRSGEGNNCDEHYFAESQLLVLDPNPLEG.

Belongs to the ureidoglycolate lyase family. In terms of assembly, homodimer. Requires Ni(2+) as cofactor.

The catalysed reaction is (S)-ureidoglycolate = urea + glyoxylate. The protein operates within nitrogen metabolism; (S)-allantoin degradation. Catalyzes the catabolism of the allantoin degradation intermediate (S)-ureidoglycolate, generating urea and glyoxylate. Involved in the utilization of allantoin as nitrogen source. In Pseudomonas savastanoi pv. phaseolicola (strain 1448A / Race 6) (Pseudomonas syringae pv. phaseolicola (strain 1448A / Race 6)), this protein is Ureidoglycolate lyase.